The following is a 258-amino-acid chain: Lysine-rich coiled-coil protein 1 (258 aa).

The segment at Asp142 to Phe258 is disordered. Residues Ala150–Arg161 show a composition bias toward basic residues. Composition is skewed to basic and acidic residues over residues His162–Ser175, Cys183–Leu213, and Lys220–Lys232. Residues Glu211 to Glu248 are a coiled coil.

This Pongo abelii (Sumatran orangutan) protein is Lysine-rich coiled-coil protein 1 (KRCC1).